A 70-amino-acid chain; its full sequence is Cytochrome c oxidase subunit 8B, mitochondrial (70 aa).

Residues 1-24 (MLSLRPALRLLQAPLRCWAVPKAH) constitute a mitochondrion transit peptide. Residues 25–35 (VSAKPAETPTS) lie on the Mitochondrial matrix side of the membrane. Residues 36-59 (PAEQAVGLSFIFITFLGPAGWILS) form a helical membrane-spanning segment. Residues 60–70 (HVENYKKRPRA) lie on the Mitochondrial intermembrane side of the membrane.

The protein belongs to the cytochrome c oxidase VIII family. As to quaternary structure, component of the cytochrome c oxidase (complex IV, CIV), a multisubunit enzyme composed of 14 subunits. The complex is composed of a catalytic core of 3 subunits MT-CO1, MT-CO2 and MT-CO3, encoded in the mitochondrial DNA, and 11 supernumerary subunits COX4I, COX5A, COX5B, COX6A, COX6B, COX6C, COX7A, COX7B, COX7C, COX8 and NDUFA4, which are encoded in the nuclear genome. The complex exists as a monomer or a dimer and forms supercomplexes (SCs) in the inner mitochondrial membrane with NADH-ubiquinone oxidoreductase (complex I, CI) and ubiquinol-cytochrome c oxidoreductase (cytochrome b-c1 complex, complex III, CIII), resulting in different assemblies (supercomplex SCI(1)III(2)IV(1) and megacomplex MCI(2)III(2)IV(2)).

The protein localises to the mitochondrion inner membrane. Its pathway is energy metabolism; oxidative phosphorylation. Functionally, component of the cytochrome c oxidase, the last enzyme in the mitochondrial electron transport chain which drives oxidative phosphorylation. The respiratory chain contains 3 multisubunit complexes succinate dehydrogenase (complex II, CII), ubiquinol-cytochrome c oxidoreductase (cytochrome b-c1 complex, complex III, CIII) and cytochrome c oxidase (complex IV, CIV), that cooperate to transfer electrons derived from NADH and succinate to molecular oxygen, creating an electrochemical gradient over the inner membrane that drives transmembrane transport and the ATP synthase. Cytochrome c oxidase is the component of the respiratory chain that catalyzes the reduction of oxygen to water. Electrons originating from reduced cytochrome c in the intermembrane space (IMS) are transferred via the dinuclear copper A center (CU(A)) of subunit 2 and heme A of subunit 1 to the active site in subunit 1, a binuclear center (BNC) formed by heme A3 and copper B (CU(B)). The BNC reduces molecular oxygen to 2 water molecules using 4 electrons from cytochrome c in the IMS and 4 protons from the mitochondrial matrix. This is Cytochrome c oxidase subunit 8B, mitochondrial (COX8B) from Ateles belzebuth (White-bellied spider monkey).